The sequence spans 437 residues: Magnetosome protein MamN (437 aa).

Helical transmembrane passes span Leu-26–Thr-46, Ser-53–Ala-73, Trp-95–Val-115, Val-136–Gly-156, Phe-174–Glu-194, Leu-226–Pro-246, Gly-252–Phe-268, Asp-281–Leu-301, Ala-320–Ala-340, Ala-358–Ala-378, and Trp-416–Val-436.

The protein belongs to the arsenite-antimonite (ArsB) efflux (TC 2.A.45) family.

The protein localises to the magnetosome membrane. Plays a role in biomineralization; might regulate pH in the magnetosome. This Paramagnetospirillum magneticum (strain ATCC 700264 / AMB-1) (Magnetospirillum magneticum) protein is Magnetosome protein MamN (mamN).